We begin with the raw amino-acid sequence, 553 residues long: Transcription factor MYB65 (553 aa).

Residues 1–44 (MSYTTATADSDDGMHSSIHNESPAPDSISNGCRSRGKRSVLKKG) are disordered. HTH myb-type domains are found at residues 38–90 (RSVL…ANHL) and 91–145 (RPNL…KRRQ). DNA-binding regions (H-T-H motif) lie at residues 66 to 90 (WNAV…ANHL) and 118 to 141 (WAQM…NTRI).

As to expression, mostly expressed in roots (e.g. root tips), stems, pollen, shoot apices, flowers and floral shoot tips, and, to a lower extent, in leaves and siliques.

The protein localises to the nucleus. In terms of biological role, transcriptional activator of alpha-amylase expression that binds to 5'-CAACTGTC-3' motif in target gene promoter. In vegetative tissues, inhibits growth by reducing cell proliferation. Promotes the expression of aleurone-related genes (e.g. CP1, CP, GASA1, BXL1 and BXL2) in seeds. Together with MYB33 and MYB101, promotes the programmed cell death (PCD) the vacuolation of protein storage vacuoles (PSVs) in the aleurone layers during seed germination. Together with MYB33, facilitates anther and tapetum development. The protein is Transcription factor MYB65 of Arabidopsis thaliana (Mouse-ear cress).